Consider the following 535-residue polypeptide: Flavin-containing monooxygenase iboF (535 aa).

The signal sequence occupies residues 1 to 24; sequence MFSLRPTALVSLSVVLFSIQETLS. An FAD-binding site is contributed by 60-65; it reads GAGPSG. Asparagine 134, asparagine 243, and asparagine 300 each carry an N-linked (GlcNAc...) asparagine glycan. An NADP(+)-binding site is contributed by 307–312; the sequence is GAAASG. N-linked (GlcNAc...) asparagine glycans are attached at residues asparagine 356, asparagine 382, and asparagine 410.

The protein belongs to the FMO family. Requires FAD as cofactor.

It functions in the pathway secondary metabolite biosynthesis. In terms of biological role, flavin-containing monooxygenase; part of the gene cluster that mediates the biosynthesis of the psychoactive metabolites ibotenic acid and muscimol. The first committed step is glutamate hydroxylation by the 2-oxoglutarate-dependent dioxygenase iboH, and the last step is decarboxylation of ibotenic acid to muscimol by the decarboxylase iboD. The order of the intermediate reactions is somewhat ambiguous. IboA likely activates the carboxylic acid at position 5 to introduce an amide bond, and the flavin monooxygenase iboF generates the N-O bond. There are several options for the latter step. One option is that iboF directly hydroxylates the amide nitrogen formed by iboA to produce a hydroxamic acid species. Another option is that iboF hydroxylates an external N-containing compound, whose resulting N-O bond is subsequently introduced into the hydroxyglutamate scaffold. The paralogous PLP-dependent cystathionine gamma-synthase-like enzymes iboG1 and iboG2 are likely involved in substitution of the OH group at position 3 by the O-N moiety. The first cyclic intermediate is most probably tricholomic acid which is likely desaturated to ibotenic acid by the cytochrome P450 monooxygenase iboC. The polypeptide is Flavin-containing monooxygenase iboF (Amanita muscaria (strain Koide BX008)).